The sequence spans 108 residues: UPF0145 protein YjfJ (108 aa).

This sequence belongs to the UPF0145 family.

This is UPF0145 protein YjfJ (yjfJ) from Lactococcus lactis subsp. lactis (strain IL1403) (Streptococcus lactis).